A 354-amino-acid polypeptide reads, in one-letter code: Isocitrate dehydrogenase [NAD] regulatory subunit A, mitochondrial (354 aa).

The substrate site is built by Ser95, Asn97, Arg101, Arg111, and Arg132. Asp219, Asp243, and Asp247 together coordinate Mg(2+). NADP(+) is bound by residues 276 to 282 and Asn289; that span reads HGTAPDI.

This sequence belongs to the isocitrate and isopropylmalate dehydrogenases family. Heterooligomer of catalytic and regulatory subunits. The cofactor is Mg(2+). Requires Mn(2+) as cofactor.

Its subcellular location is the mitochondrion. The catalysed reaction is D-threo-isocitrate + NAD(+) = 2-oxoglutarate + CO2 + NADH. Its function is as follows. Performs an essential role in the oxidative function of the citric acid cycle. This Dictyostelium discoideum (Social amoeba) protein is Isocitrate dehydrogenase [NAD] regulatory subunit A, mitochondrial (idhA).